The primary structure comprises 255 residues: MKHVAKKRFGQNFLTDRAIINSLIDAIAPQPQDCMVEIGPGLGAMTQPLLERLQHLHVVEIDRDIIQWMQGHYPQDKLTIYASDALKFNFGNISDRLRVVGNLPYNISTPILFHLLDNVPHIIDMHFMLQKEVVERMVAAPSSAAYGRLSVMLQYRLHMEYLLTVPPEAFDPAPKVESAFVRAVPYTVLPHPAKDEALLGRIVTAAFAQRRKTLRNTLKGLLDDTGFASLGIDPQLRAENIAPAGFVAIANYLAA.

Asn12, Leu14, Gly39, Glu60, Asp84, and Asn102 together coordinate S-adenosyl-L-methionine.

This sequence belongs to the class I-like SAM-binding methyltransferase superfamily. rRNA adenine N(6)-methyltransferase family. RsmA subfamily.

It localises to the cytoplasm. It carries out the reaction adenosine(1518)/adenosine(1519) in 16S rRNA + 4 S-adenosyl-L-methionine = N(6)-dimethyladenosine(1518)/N(6)-dimethyladenosine(1519) in 16S rRNA + 4 S-adenosyl-L-homocysteine + 4 H(+). Its function is as follows. Specifically dimethylates two adjacent adenosines (A1518 and A1519) in the loop of a conserved hairpin near the 3'-end of 16S rRNA in the 30S particle. May play a critical role in biogenesis of 30S subunits. The chain is Ribosomal RNA small subunit methyltransferase A from Methylobacillus flagellatus (strain ATCC 51484 / DSM 6875 / VKM B-1610 / KT).